The sequence spans 338 residues: Tetraacyldisaccharide 4'-kinase (338 aa).

51–58 (HLGGAGKT) contributes to the ATP binding site.

The protein belongs to the LpxK family.

The enzyme catalyses a lipid A disaccharide + ATP = a lipid IVA + ADP + H(+). Its pathway is glycolipid biosynthesis; lipid IV(A) biosynthesis; lipid IV(A) from (3R)-3-hydroxytetradecanoyl-[acyl-carrier-protein] and UDP-N-acetyl-alpha-D-glucosamine: step 6/6. Transfers the gamma-phosphate of ATP to the 4'-position of a tetraacyldisaccharide 1-phosphate intermediate (termed DS-1-P) to form tetraacyldisaccharide 1,4'-bis-phosphate (lipid IVA). This chain is Tetraacyldisaccharide 4'-kinase, found in Rhodopseudomonas palustris (strain BisB5).